A 256-amino-acid polypeptide reads, in one-letter code: Thiazole synthase (256 aa).

K95 functions as the Schiff-base intermediate with DXP in the catalytic mechanism. 1-deoxy-D-xylulose 5-phosphate-binding positions include G156, 182 to 183, and 204 to 205; these read AG and NT.

Belongs to the ThiG family. In terms of assembly, homotetramer. Forms heterodimers with either ThiH or ThiS.

It is found in the cytoplasm. The enzyme catalyses [ThiS sulfur-carrier protein]-C-terminal-Gly-aminoethanethioate + 2-iminoacetate + 1-deoxy-D-xylulose 5-phosphate = [ThiS sulfur-carrier protein]-C-terminal Gly-Gly + 2-[(2R,5Z)-2-carboxy-4-methylthiazol-5(2H)-ylidene]ethyl phosphate + 2 H2O + H(+). It functions in the pathway cofactor biosynthesis; thiamine diphosphate biosynthesis. Functionally, catalyzes the rearrangement of 1-deoxy-D-xylulose 5-phosphate (DXP) to produce the thiazole phosphate moiety of thiamine. Sulfur is provided by the thiocarboxylate moiety of the carrier protein ThiS. In vitro, sulfur can be provided by H(2)S. The protein is Thiazole synthase of Shigella flexneri.